Consider the following 578-residue polypeptide: ATP-dependent RNA helicase has-1 (578 aa).

Residues 1-91 form a disordered region; it reads MASEFSKKRK…KDAEAGDELT (91 aa). Residues 13–26 show a composition bias toward basic and acidic residues; it reads DAKIATEDGAATDK. A compositionally biased stretch (basic residues) spans 27-36; that stretch reads KTKKVKKDKK. 2 stretches are compositionally biased toward acidic residues: residues 43–54 and 77–88; these read EVVEDATPEEEN and EDSDDKDAEAGD. Residues 107–135 carry the Q motif motif; that stretch reads TDFSELNLSDKTMKAIAEMGFTKMTEIQR. The 176-residue stretch at 138 to 313 folds into the Helicase ATP-binding domain; that stretch reads IPPLLAGKDV…RISLRPGPLY (176 aa). 151-158 is an ATP binding site; the sequence is AKTGSGKT. Positions 260–263 match the DEAD box motif; sequence DEAD. A Bipartite nuclear localization signal motif is present at residues 339 to 355; the sequence is KRFLLLFSFLKKMQKKK. Residues 343 to 497 form the Helicase C-terminal domain; sequence LLFSFLKKMQ…NVQSQLEKLI (155 aa). Residues 556–578 form a disordered region; it reads SMSRDKKQTSRRAYGSQPKQNRH.

It belongs to the DEAD box helicase family. DDX18/HAS1 subfamily. In terms of assembly, associates in the nucleolus with the 60S and pre-60S ribosomal subunits.

The protein localises to the nucleus. Its subcellular location is the nucleolus. The enzyme catalyses ATP + H2O = ADP + phosphate + H(+). In terms of biological role, ATP-dependent RNA helicase involved in 40S ribosomal subunit biogenesis. Required for the processing and cleavage of 35S pre-rRNA at sites A0, A1, and A2, leading to mature 18S rRNA. The polypeptide is ATP-dependent RNA helicase has-1 (has-1) (Neurospora crassa (strain ATCC 24698 / 74-OR23-1A / CBS 708.71 / DSM 1257 / FGSC 987)).